We begin with the raw amino-acid sequence, 201 residues long: Zinc finger protein 239 (201 aa).

C2H2-type zinc fingers lie at residues 6-28, 34-56, 62-84, 90-112, 118-140, 146-168, and 174-196; these read YKCD…HSVH, FKCD…KRVH, YACE…QRVH, YKCG…RCTH, YQCY…LRVH, YHCG…QRVH, and YECS…QRVH.

Belongs to the krueppel C2H2-type zinc-finger protein family. As to expression, preferentially expressed in transformed mouse cells.

Its subcellular location is the nucleus. Its function is as follows. May be involved in transcriptional regulation. The sequence is that of Zinc finger protein 239 (Znf239) from Mus musculus (Mouse).